The chain runs to 136 residues: Large ribosomal subunit protein uL16 (136 aa).

The protein belongs to the universal ribosomal protein uL16 family. As to quaternary structure, part of the 50S ribosomal subunit.

Its function is as follows. Binds 23S rRNA and is also seen to make contacts with the A and possibly P site tRNAs. This chain is Large ribosomal subunit protein uL16, found in Vibrio atlanticus (strain LGP32) (Vibrio splendidus (strain Mel32)).